Here is a 173-residue protein sequence, read N- to C-terminus: Shikimate kinase 1 (173 aa).

14 to 19 (GAGKST) provides a ligand contact to ATP. Ser18 contributes to the Mg(2+) binding site. Residues Asp36, Arg60, and Gly82 each contribute to the substrate site. Residue Arg120 participates in ATP binding. Residue Arg140 coordinates substrate. Residue Gln157 coordinates ATP.

The protein belongs to the shikimate kinase family. As to quaternary structure, monomer. The cofactor is Mg(2+).

The protein resides in the cytoplasm. The enzyme catalyses shikimate + ATP = 3-phosphoshikimate + ADP + H(+). Its pathway is metabolic intermediate biosynthesis; chorismate biosynthesis; chorismate from D-erythrose 4-phosphate and phosphoenolpyruvate: step 5/7. Its function is as follows. Catalyzes the specific phosphorylation of the 3-hydroxyl group of shikimic acid using ATP as a cosubstrate. The sequence is that of Shikimate kinase 1 from Salmonella typhimurium (strain LT2 / SGSC1412 / ATCC 700720).